A 322-amino-acid polypeptide reads, in one-letter code: Deoxyhypusine hydroxylase (322 aa).

2 HEAT-like PBS-type repeats span residues 76 to 102 and 109 to 135; these read LKHE…VLAD and VRHE…YFKE. Fe cation contacts are provided by H78, E79, H111, E112, H236, E237, H269, and E270. The stretch at 267 to 293 is one HEAT-like PBS-type 3 repeat; it reads VRHEAAEALGSIATDDVLPVLKEHLKD.

The protein belongs to the deoxyhypusine hydroxylase family. Fe(2+) is required as a cofactor.

Its subcellular location is the cytoplasm. It localises to the nucleus. It carries out the reaction [eIF5A protein]-deoxyhypusine + AH2 + O2 = [eIF5A protein]-hypusine + A + H2O. The protein operates within protein modification; eIF5A hypusination. Functionally, catalyzes the hydroxylation of the N(6)-(4-aminobutyl)-L-lysine intermediate to form hypusine, an essential post-translational modification only found in mature eIF-5A factor. This is Deoxyhypusine hydroxylase from Kluyveromyces lactis (strain ATCC 8585 / CBS 2359 / DSM 70799 / NBRC 1267 / NRRL Y-1140 / WM37) (Yeast).